A 1363-amino-acid polypeptide reads, in one-letter code: Xanthine dehydrogenase (1363 aa).

Residues 35-121 (DTIRFYLNGT…GKHVITVEGI (87 aa)) enclose the 2Fe-2S ferredoxin-type domain. Positions 73, 78, 81, 103, 142, 145, 177, and 179 each coordinate [2Fe-2S] cluster. In terms of domain architecture, FAD-binding PCMH-type spans 266-450 (FGNKRKKWYR…SSLRIPTASE (185 aa)). FAD is bound by residues 294-301 (LIGGSTET), phenylalanine 374, 384-388 (SPAGN), aspartate 397, and lysine 459. Mo-molybdopterin is bound by residues glutamine 798 and phenylalanine 829. Residues glutamate 833 and arginine 911 each coordinate substrate. Position 943 (arginine 943) interacts with Mo-molybdopterin. Substrate contacts are provided by phenylalanine 945 and threonine 1041. Alanine 1110 lines the Mo-molybdopterin pocket. The active-site Proton acceptor is the glutamate 1295.

It belongs to the xanthine dehydrogenase family. It depends on FAD as a cofactor. Mo-molybdopterin serves as cofactor. Requires [2Fe-2S] cluster as cofactor.

The protein localises to the peroxisome. It catalyses the reaction xanthine + NAD(+) + H2O = urate + NADH + H(+). The enzyme catalyses hypoxanthine + NAD(+) + H2O = xanthine + NADH + H(+). In terms of biological role, key enzyme in purine degradation. Catalyzes the oxidation of hypoxanthine to xanthine. Catalyzes the oxidation of xanthine to uric acid. The polypeptide is Xanthine dehydrogenase (hxA) (Emericella nidulans (strain FGSC A4 / ATCC 38163 / CBS 112.46 / NRRL 194 / M139) (Aspergillus nidulans)).